Here is a 359-residue protein sequence, read N- to C-terminus: Alanine racemase (359 aa).

Lys35 (proton acceptor; specific for D-alanine) is an active-site residue. An N6-(pyridoxal phosphate)lysine modification is found at Lys35. Residue Arg130 participates in substrate binding. Tyr255 acts as the Proton acceptor; specific for L-alanine in catalysis. Met303 is a binding site for substrate.

This sequence belongs to the alanine racemase family. It depends on pyridoxal 5'-phosphate as a cofactor.

The catalysed reaction is L-alanine = D-alanine. It participates in amino-acid biosynthesis; D-alanine biosynthesis; D-alanine from L-alanine: step 1/1. Functionally, catalyzes the interconversion of L-alanine and D-alanine. May also act on other amino acids. This Janthinobacterium sp. (strain Marseille) (Minibacterium massiliensis) protein is Alanine racemase (alr).